The sequence spans 638 residues: Asparagine--tRNA ligase, cytoplasmic 2 (638 aa).

Over residues 1 to 16 the composition is skewed to basic and acidic residues; the sequence is MESHGKTHQKEHDNDL. 2 disordered regions span residues 1–23 and 62–87; these read MESHGKTHQKEHDNDLSPKPITL and VKKNSPPPPLPVVAAPSPSSGGDQAH.

It belongs to the class-II aminoacyl-tRNA synthetase family.

It localises to the cytoplasm. Its subcellular location is the cytosol. The enzyme catalyses tRNA(Asn) + L-asparagine + ATP = L-asparaginyl-tRNA(Asn) + AMP + diphosphate + H(+). The polypeptide is Asparagine--tRNA ligase, cytoplasmic 2 (Arabidopsis thaliana (Mouse-ear cress)).